Here is a 383-residue protein sequence, read N- to C-terminus: MHC class I polypeptide-related sequence A (383 aa).

The signal sequence occupies residues 1 to 23 (MGLGPVFLLLAGIFPFAPPGAAA). At 24 to 307 (EPHSLRYNLT…GKVLVLQSHW (284 aa)) the chain is on the extracellular side. The N-linked (GlcNAc...) asparagine glycan is linked to Asn31. An intrachain disulfide couples Cys59 to Cys64. Residue Asn79 is glycosylated (N-linked (GlcNAc...) asparagine). Cys119 and Cys187 are oxidised to a cystine. In terms of domain architecture, Ig-like C1-type spans 207-296 (PMVNVTRSEA…SGNHSTHPVP (90 aa)). N-linked (GlcNAc...) asparagine glycans are attached at residues Asn210, Asn220, and Asn261. Cys225 and Cys282 are joined by a disulfide. Residues 308 to 328 (QTFHVSAVAAAAIFVIIIFYV) form a helical membrane-spanning segment. Residues 329–383 (RCCKKKTSAAEGPELVSLQVLDQHPVGTSDHRDATQLGFQPLMSDLGSTGSTEGA) lie on the Cytoplasmic side of the membrane. 2 S-palmitoyl cysteine lipidation sites follow: Cys330 and Cys331.

Belongs to the MHC class I family. MIC subfamily. In terms of assembly, unlike classical MHC class I molecules, does not form a heterodimer with beta-2-microglobulin. Binds as a monomer to a KLRK1/NKG2D homodimer. KLRK1 forms a complex with HCST/DAP10 in which KLRK1 binds MICA while HCST acts as an adapter molecule which enables signal transduction. Interacts with PDIA6 on the surface of tumor cells, leading to disulfide bond reduction which is required for release of MICA from tumor cells. (Microbial infection) Interacts with human cytomegalovirus/HHV-5 protein UL142. In terms of processing, N-glycosylated. Glycosylation is not essential for interaction with KLRK1/NKG2D but enhances complex formation. Proteolytically cleaved and released from the cell surface of tumor cells which impairs KLRK1/NKG2D expression and T-cell activation. Post-translationally, palmitoylated on cysteine residues in the cytoplasmic tail leading to its association with membrane microdomains enriched in cholesterol. In terms of processing, N-glycosylation is necessary for cell surface expression. (Microbial infection) Ubiquitinated by human herpesvirus 8 protein K5, leading to degradation. Widely expressed with the exception of the central nervous system where it is absent. Expressed predominantly in gastric epithelium and also in monocytes, keratinocytes, endothelial cells, fibroblasts and in the outer layer of Hassal's corpuscles within the medulla of normal thymus. In skin, expressed mainly in the keratin layers, basal cells, ducts and follicles. Also expressed in many, but not all, epithelial tumors of lung, breast, kidney, ovary, prostate and colon. In thyomas, overexpressed in cortical and medullar epithelial cells. Tumors expressing MICA display increased levels of gamma delta T-cells.

It localises to the cell membrane. Its subcellular location is the cytoplasm. In terms of biological role, widely expressed membrane-bound protein which acts as a ligand to stimulate an activating receptor KLRK1/NKG2D, expressed on the surface of essentially all human natural killer (NK), gammadelta T and CD8 alphabeta T-cells. Up-regulated in stressed conditions, such as viral and bacterial infections or DNA damage response, serves as signal of cellular stress, and engagement of KLRK1/NKG2D by MICA triggers NK-cells resulting in a range of immune effector functions, such as cytotoxicity and cytokine production. The sequence is that of MHC class I polypeptide-related sequence A from Homo sapiens (Human).